We begin with the raw amino-acid sequence, 262 residues long: Ribosome-recycling factor, mitochondrial (262 aa).

A mitochondrion-targeting transit peptide spans Met-1–Phe-55.

It belongs to the RRF family.

It is found in the mitochondrion. Responsible for the disassembly of ribosomes from messenger RNA at the termination of mitochondrial protein biosynthesis. Acts in collaboration with GFM2. Promotes mitochondrial ribosome recycling by dissolution of intersubunit contacts. The protein is Ribosome-recycling factor, mitochondrial (Mrrf) of Rattus norvegicus (Rat).